The chain runs to 308 residues: Insoluble matrix shell protein 4 (308 aa).

Disordered regions lie at residues histidine 1–tyrosine 21, asparagine 47–valine 104, and tyrosine 134–serine 250. The span at asparagine 47–serine 99 shows a compositional bias: low complexity.

Component of the acid-insoluble organic matrix of the calcified shell.

It is found in the secreted. In Ruditapes philippinarum (Japanese carpet shell), this protein is Insoluble matrix shell protein 4.